Reading from the N-terminus, the 373-residue chain is Glutamate 5-kinase (373 aa).

ATP is bound at residue Lys-12. Residues Ser-52, Asp-139, and Asn-154 each coordinate substrate. Residue 216 to 222 participates in ATP binding; sequence TGGMVTK. Residues 281-359 enclose the PUA domain; sequence RGNICIDDGA…DEINTVLAGN (79 aa).

It belongs to the glutamate 5-kinase family.

It is found in the cytoplasm. It carries out the reaction L-glutamate + ATP = L-glutamyl 5-phosphate + ADP. It functions in the pathway amino-acid biosynthesis; L-proline biosynthesis; L-glutamate 5-semialdehyde from L-glutamate: step 1/2. In terms of biological role, catalyzes the transfer of a phosphate group to glutamate to form L-glutamate 5-phosphate. The chain is Glutamate 5-kinase from Dehalococcoides mccartyi (strain ATCC BAA-2266 / KCTC 15142 / 195) (Dehalococcoides ethenogenes (strain 195)).